We begin with the raw amino-acid sequence, 152 residues long: Syntaxin-8A (152 aa).

Over residues 1-14 (MNNNNNFNSNFNSN) the composition is skewed to low complexity. Residues 1–22 (MNNNNNFNSNFNSNRISSTQPY) are disordered. Residues 1 to 131 (MNNNNNFNSN…LTQQSKTTGY (131 aa)) are Cytoplasmic-facing. One can recognise a t-SNARE coiled-coil homology domain in the interval 60–122 (KRDMEEQDKM…RNTTKNLITL (63 aa)). Residues 132–152 (CSAICFLLLVLLVIIILASVL) traverse the membrane as a helical; Anchor for type IV membrane protein segment.

The protein belongs to the syntaxin family. Component of the SNARE complex composed of syn7A, syn8A, vamp7A and vti1A.

It localises to the endosome membrane. In terms of biological role, involved in the targeting and/or fusion of transport vesicles to their target membrane during transport of proteins from the early endosome to the lysosome. Required for fusion of late endosomes with lysosomes and homotypic lysosomal fusion. The chain is Syntaxin-8A from Dictyostelium discoideum (Social amoeba).